Here is a 308-residue protein sequence, read N- to C-terminus: Ribosomal RNA large subunit methyltransferase F (308 aa).

Belongs to the methyltransferase superfamily. METTL16/RlmF family.

The protein resides in the cytoplasm. It carries out the reaction adenosine(1618) in 23S rRNA + S-adenosyl-L-methionine = N(6)-methyladenosine(1618) in 23S rRNA + S-adenosyl-L-homocysteine + H(+). Functionally, specifically methylates the adenine in position 1618 of 23S rRNA. The sequence is that of Ribosomal RNA large subunit methyltransferase F from Escherichia coli (strain SMS-3-5 / SECEC).